We begin with the raw amino-acid sequence, 229 residues long: Golgi to ER traffic protein 1 (229 aa).

The Lumenal segment spans residues 1–14 (MGILAALDLHPYTL). Residues 15 to 34 (VVSSFTVLLIQQLVGFIGKS) traverse the membrane as a helical segment. Over 35–122 (TIQEFAWLFY…KINSLVGVVL (88 aa)) the chain is Cytoplasmic. A coiled-coil region spans residues 60–117 (HTKKQEELHKLNREKRSISAQDEYAKWTKLNRQAEKLTAEVKSLSDDIAKDKSKINSL). The helical transmembrane segment at 123–143 (LFLTTLPLWVFRLWFRKSVLF) threads the bilayer. At 144–167 (YLPTGVFPYYVERVLAIPFFASGS) the chain is on the lumenal side. Residues 168–184 (VGLTVWMFAVNNVISSV) form a helical membrane-spanning segment. The Cytoplasmic portion of the chain corresponds to 185-229 (LFLLTFPFKPSVPIPIRQTKVEEVVPESAESKESSPEVIDIADAN). Residues 210–219 (PESAESKESS) are compositionally biased toward basic and acidic residues. Residues 210–229 (PESAESKESSPEVIDIADAN) form a disordered region.

This sequence belongs to the WRB/GET1 family. In terms of assembly, component of the Golgi to ER traffic (GET) complex, which is composed of GET1, GET2 and GET3. Within the complex, GET1 and GET2 form a heterotetramer which is stabilized by phosphatidylinositol binding and which binds to the GET3 homodimer.

The protein localises to the endoplasmic reticulum membrane. It is found in the golgi apparatus membrane. In terms of biological role, required for the post-translational delivery of tail-anchored (TA) proteins to the endoplasmic reticulum. Together with GET2, acts as a membrane receptor for soluble GET3, which recognizes and selectively binds the transmembrane domain of TA proteins in the cytosol. The GET complex cooperates with the HDEL receptor ERD2 to mediate the ATP-dependent retrieval of resident ER proteins that contain a C-terminal H-D-E-L retention signal from the Golgi to the ER. The chain is Golgi to ER traffic protein 1 from Scheffersomyces stipitis (strain ATCC 58785 / CBS 6054 / NBRC 10063 / NRRL Y-11545) (Yeast).